A 153-amino-acid chain; its full sequence is Suppressor of RNA silencing (153 aa).

The segment at 1–23 (MMATFSCVCCGTSTTSTYCGKRC) is C-1. Residues 1 to 85 (MMATFSCVCC…IVSRFCGQKH (85 aa)) are interaction with TGB1. Residues 19-47 (CGKRCERKHVYSETRNKRLELYKKYLLEP) form a basic motif (BM) region. The C-2 stretch occupies residues 60-85 (CGMPCSIAEEACDQLPIVSRFCGQKH). The interval 86-127 (ADLYDSLLKRSEQELLLEFLQKKMQELKLSHIVKMAKLESEV) is interaction with replication protein alpha-A. Residues 92–132 (LLKRSEQELLLEFLQKKMQELKLSHIVKMAKLESEVNAIRK) adopt a coiled-coil conformation. The residue at position 96 (Ser96) is a Phosphoserine.

The protein belongs to the virgaviridae suppressor of RNA silencing family. In terms of assembly, homooligomer. Interacts (via C-terminus) with replication protein alpha-A. Interacts (via N-terminus) with the movement protein TGB1; this interaction targets gammab-TGB1 at the periphery of chloroplasts and plasmodesmata. Interacts with host autophagy protein ATG7; this interaction disrupts the host ATG7-ATG8 interaction to promote viral infection. Interacts (via BM region) with host STY46; this interaction inhibits the viral infection. Post-translationally, phosphorylated at Ser-96 by a host PKA-like kinase; the phosphorylation at this site seems to suppress host cell death. Serine-phosphorylated by host STY46 kinase.

Its subcellular location is the host chloroplast envelope. It localises to the host endoplasmic reticulum. It is found in the host cell junction. The protein localises to the host plasmodesma. Its function is as follows. Suppressor of RNA-mediated gene silencing, also known as post-transcriptional gene silencing (PTGS), a mechanism of plant viral defense that limits the accumulation of viral RNAs. Promotes viral cell-to-cell long distance movement by enhancing the ATPase activity of TGB1. Enhances RNA helicase activity of replication protein alpha-A. Suppresses autophagy induced by the host as a defense mechanism against viral infection. This Barley stripe mosaic virus (BSMV) protein is Suppressor of RNA silencing.